Consider the following 455-residue polypeptide: Bleomycin hydrolase (455 aa).

Active-site residues include C73, H372, and N396.

The protein belongs to the peptidase C1 family. In terms of assembly, homooctamer.

The protein resides in the cytoplasm. It carries out the reaction Inactivates bleomycin B2 (a cytotoxic glycometallopeptide) by hydrolysis of a carboxyamide bond of beta-aminoalanine, but also shows general aminopeptidase activity. The specificity varies somewhat with source, but amino acid arylamides of Met, Leu and Ala are preferred.. Functionally, the normal physiological role of BLM hydrolase is unknown, but it catalyzes the inactivation of the antitumor drug BLM (a glycopeptide) by hydrolyzing the carboxamide bond of its B-aminoalaninamide moiety thus protecting normal and malignant cells from BLM toxicity. The sequence is that of Bleomycin hydrolase (BLMH) from Gallus gallus (Chicken).